Consider the following 125-residue polypeptide: MARSATLAAAALALCLLLAPPGLAWYKPAAGHSSYSVGRAAGLLSGLRRSPYARRSQPYRGAEPPGGAGASPELQLHPRLRSLAVCVQDVAPNLQRCERLPDGRGTYQCKANVFLSLRAADCLAA.

The first 24 residues, 1–24 (MARSATLAAAALALCLLLAPPGLA), serve as a signal peptide directing secretion. The tract at residues 54 to 73 (RRSQPYRGAEPPGGAGASPE) is disordered. Positions 56-125 (SQPYRGAEPP…SLRAADCLAA (70 aa)) are excised as a propeptide.

It belongs to the neuropeptide B/W family. In terms of tissue distribution, widely expressed in the central nervous system. High levels are found in substantia nigra, hypothalamus, hippocampus, spinal cord, placenta and fetal brain; lower levels are found in testis, uterus and ovary. Also detected at high levels in colorectal adenocarcinoma.

The protein resides in the secreted. May be involved in the regulation of feeding, neuroendocrine system, memory, learning and in the afferent pain pathway. In Homo sapiens (Human), this protein is Neuropeptide B (NPB).